The following is a 213-amino-acid chain: Large ribosomal subunit protein uL3 (213 aa).

This sequence belongs to the universal ribosomal protein uL3 family. Part of the 50S ribosomal subunit. Forms a cluster with proteins L14 and L19.

Functionally, one of the primary rRNA binding proteins, it binds directly near the 3'-end of the 23S rRNA, where it nucleates assembly of the 50S subunit. The polypeptide is Large ribosomal subunit protein uL3 (Petrotoga mobilis (strain DSM 10674 / SJ95)).